The chain runs to 437 residues: Trigger factor (437 aa).

A PPIase FKBP-type domain is found at 163–248 (GHMVTIDYAF…LNEIKRKELP (86 aa)).

This sequence belongs to the FKBP-type PPIase family. Tig subfamily.

It localises to the cytoplasm. The catalysed reaction is [protein]-peptidylproline (omega=180) = [protein]-peptidylproline (omega=0). In terms of biological role, involved in protein export. Acts as a chaperone by maintaining the newly synthesized protein in an open conformation. Functions as a peptidyl-prolyl cis-trans isomerase. The chain is Trigger factor from Pelobacter propionicus (strain DSM 2379 / NBRC 103807 / OttBd1).